A 710-amino-acid polypeptide reads, in one-letter code: Probable thimet oligopeptidase (710 aa).

His-502 contacts Zn(2+). Glu-503 is an active-site residue. Residue His-506 coordinates Zn(2+).

Belongs to the peptidase M3 family. Zn(2+) is required as a cofactor.

It localises to the cytoplasm. The enzyme catalyses Preferential cleavage of bonds with hydrophobic residues at P1, P2 and P3' and a small residue at P1' in substrates of 5 to 15 residues.. In terms of biological role, involved in cytoplasmic peptide degradation. The protein is Probable thimet oligopeptidase of Arabidopsis thaliana (Mouse-ear cress).